The primary structure comprises 192 residues: dTTP/UTP pyrophosphatase (192 aa).

D71 functions as the Proton acceptor in the catalytic mechanism.

This sequence belongs to the Maf family. YhdE subfamily. A divalent metal cation serves as cofactor.

It is found in the cytoplasm. It carries out the reaction dTTP + H2O = dTMP + diphosphate + H(+). The catalysed reaction is UTP + H2O = UMP + diphosphate + H(+). Functionally, nucleoside triphosphate pyrophosphatase that hydrolyzes dTTP and UTP. May have a dual role in cell division arrest and in preventing the incorporation of modified nucleotides into cellular nucleic acids. This Clostridium tetani (strain Massachusetts / E88) protein is dTTP/UTP pyrophosphatase.